A 545-amino-acid polypeptide reads, in one-letter code: Probable bifunctional tRNA threonylcarbamoyladenosine biosynthesis protein (545 aa).

Residues 1–329 (MDTSKDLICI…YRSDMVEVNW (329 aa)) are kae1. Fe cation contacts are provided by His-112, His-116, and Tyr-133. L-threonylcarbamoyladenylate contacts are provided by residues 133-137 (YVSGG), Asp-165, Gly-178, Glu-182, and Asn-262. Asp-290 is a Fe cation binding site. Residues 344-545 (IIPEHLIGKG…KEVEKRARYL (202 aa)) enclose the Protein kinase domain. ATP is bound by residues 350-358 (IGKGAEADI) and Lys-371. Asp-463 (proton acceptor; for kinase activity) is an active-site residue.

The protein in the N-terminal section; belongs to the KAE1 / TsaD family. It in the C-terminal section; belongs to the protein kinase superfamily. Tyr protein kinase family. BUD32 subfamily. As to quaternary structure, component of the KEOPS complex that consists of Kae1, Bud32, Cgi121 and Pcc1; the whole complex dimerizes. Fe(2+) is required as a cofactor.

The protein localises to the cytoplasm. The enzyme catalyses L-seryl-[protein] + ATP = O-phospho-L-seryl-[protein] + ADP + H(+). It carries out the reaction L-threonyl-[protein] + ATP = O-phospho-L-threonyl-[protein] + ADP + H(+). It catalyses the reaction L-threonylcarbamoyladenylate + adenosine(37) in tRNA = N(6)-L-threonylcarbamoyladenosine(37) in tRNA + AMP + H(+). Required for the formation of a threonylcarbamoyl group on adenosine at position 37 (t(6)A37) in tRNAs that read codons beginning with adenine. Is a component of the KEOPS complex that is probably involved in the transfer of the threonylcarbamoyl moiety of threonylcarbamoyl-AMP (TC-AMP) to the N6 group of A37. The Kae1 domain likely plays a direct catalytic role in this reaction. The Bud32 domain probably displays kinase activity that regulates Kae1 function. The protein is Probable bifunctional tRNA threonylcarbamoyladenosine biosynthesis protein of Methanococcus maripaludis (strain C5 / ATCC BAA-1333).